Reading from the N-terminus, the 367-residue chain is 3-methyl-2-oxobutanoate dehydrogenase subunit alpha (367 aa).

Residues Q99 to R101, P141 to I142, G170 to E176, N200 to I204, and H269 contribute to the thiamine diphosphate site. Y100 contributes to the substrate binding site. The Mg(2+) site is built by D171 and N200.

Heteromer of E1 alpha (BkdA) and beta (BkdB) subunits. Part of the BCKADH complex, consisting of multiple copies of BkdA/BkdB (E1), BkdC (E2) and Lpd (E3). Mg(2+) serves as cofactor. It depends on thiamine diphosphate as a cofactor.

The catalysed reaction is N(6)-[(R)-lipoyl]-L-lysyl-[protein] + 3-methyl-2-oxobutanoate + H(+) = N(6)-[(R)-S(8)-2-methylpropanoyldihydrolipoyl]-L-lysyl-[protein] + CO2. Component of the branched-chain alpha-ketoacid dehydrogenase (BCKADH) complex, that catalyzes the overall conversion of branched-chain alpha-ketoacids to acyl-CoA and CO(2). The sequence is that of 3-methyl-2-oxobutanoate dehydrogenase subunit alpha (bkdA) from Mycobacterium tuberculosis (strain CDC 1551 / Oshkosh).